Reading from the N-terminus, the 246-residue chain is V-type proton ATPase subunit D 1 (246 aa).

The protein belongs to the V-ATPase D subunit family. In terms of assembly, V-ATPase is a heteromultimeric enzyme made up of two complexes: the ATP-hydrolytic V1 complex and the proton translocation V0 complex. The V1 complex consists of three catalytic AB heterodimers that form a heterohexamer, three peripheral stalks each consisting of EG heterodimers, one central rotor including subunits D and F, and the regulatory subunits C and H. The proton translocation complex V0 consists of the proton transport subunit a, a ring of proteolipid subunits c9c'', rotary subunit d, subunits e and f, and the accessory subunits VhaAC45 and ATP6AP2.

Subunit of the V1 complex of vacuolar(H+)-ATPase (V-ATPase), a multisubunit enzyme composed of a peripheral complex (V1) that hydrolyzes ATP and a membrane integral complex (V0) that translocates protons. V-ATPase is responsible for acidifying and maintaining the pH of intracellular compartments and in some cell types, is targeted to the plasma membrane, where it is responsible for acidifying the extracellular environment. The protein is V-type proton ATPase subunit D 1 (Vha36-1) of Drosophila melanogaster (Fruit fly).